The sequence spans 153 residues: Putative transmembrane protein INAFM2 (153 aa).

The segment covering 1–23 (MKERDAAPAERGKPATYTGDKKA) has biased composition (basic and acidic residues). The interval 1-24 (MKERDAAPAERGKPATYTGDKKAK) is disordered. Residues 36–56 (LATVFAYVLSVSLAAIVLAVY) form a helical membrane-spanning segment. A disordered region spans residues 66-153 (AGTSGGAAGP…EETAAAPGSR (88 aa)). Residues 79 to 101 (GSNATGPSGTSGAAAAGPNTTGS) show a composition bias toward low complexity. Over residues 118 to 131 (PAPPEPPADSPPAG) the composition is skewed to pro residues.

The protein resides in the membrane. The polypeptide is Putative transmembrane protein INAFM2 (Homo sapiens (Human)).